A 302-amino-acid chain; its full sequence is Pantothenate synthetase 4 (302 aa).

51–58 (MGALHEGH) contacts ATP. The active-site Proton donor is His-58. Residue Gln-82 coordinates (R)-pantoate. Gln-82 serves as a coordination point for beta-alanine. An ATP-binding site is contributed by 166–169 (GRKD). Gln-172 provides a ligand contact to (R)-pantoate. Residues Ala-195 and 203–206 (RSSR) contribute to the ATP site.

It belongs to the pantothenate synthetase family. In terms of assembly, homodimer.

Its subcellular location is the cytoplasm. It catalyses the reaction (R)-pantoate + beta-alanine + ATP = (R)-pantothenate + AMP + diphosphate + H(+). It functions in the pathway cofactor biosynthesis; (R)-pantothenate biosynthesis; (R)-pantothenate from (R)-pantoate and beta-alanine: step 1/1. Catalyzes the condensation of pantoate with beta-alanine in an ATP-dependent reaction via a pantoyl-adenylate intermediate. The sequence is that of Pantothenate synthetase 4 from Frankia alni (strain DSM 45986 / CECT 9034 / ACN14a).